Consider the following 357-residue polypeptide: tRNA/tmRNA (uracil-C(5))-methyltransferase (357 aa).

Gln-185, Tyr-212, Asn-217, Glu-233, and Asp-291 together coordinate S-adenosyl-L-methionine. Cys-316 (nucleophile) is an active-site residue. Residue Glu-350 is the Proton acceptor of the active site.

This sequence belongs to the class I-like SAM-binding methyltransferase superfamily. RNA M5U methyltransferase family. TrmA subfamily.

The catalysed reaction is uridine(54) in tRNA + S-adenosyl-L-methionine = 5-methyluridine(54) in tRNA + S-adenosyl-L-homocysteine + H(+). It catalyses the reaction uridine(341) in tmRNA + S-adenosyl-L-methionine = 5-methyluridine(341) in tmRNA + S-adenosyl-L-homocysteine + H(+). In terms of biological role, dual-specificity methyltransferase that catalyzes the formation of 5-methyluridine at position 54 (m5U54) in all tRNAs, and that of position 341 (m5U341) in tmRNA (transfer-mRNA). This is tRNA/tmRNA (uracil-C(5))-methyltransferase from Campylobacter hominis (strain ATCC BAA-381 / DSM 21671 / CCUG 45161 / LMG 19568 / NCTC 13146 / CH001A).